The following is a 174-amino-acid chain: ATP-dependent protease subunit HslV (174 aa).

Thr-2 is an active-site residue. Positions 157, 160, and 163 each coordinate Na(+).

This sequence belongs to the peptidase T1B family. HslV subfamily. As to quaternary structure, a double ring-shaped homohexamer of HslV is capped on each side by a ring-shaped HslU homohexamer. The assembly of the HslU/HslV complex is dependent on binding of ATP.

It is found in the cytoplasm. It carries out the reaction ATP-dependent cleavage of peptide bonds with broad specificity.. With respect to regulation, allosterically activated by HslU binding. Its function is as follows. Protease subunit of a proteasome-like degradation complex believed to be a general protein degrading machinery. The protein is ATP-dependent protease subunit HslV of Shewanella halifaxensis (strain HAW-EB4).